The sequence spans 207 residues: Pyridoxal 5'-phosphate synthase subunit PdxT (207 aa).

Residue 53-55 (GES) participates in L-glutamine binding. Residue cysteine 85 is the Nucleophile of the active site. L-glutamine-binding positions include arginine 114 and 143 to 144 (IR). Residues histidine 184 and glutamate 186 each act as charge relay system in the active site.

It belongs to the glutaminase PdxT/SNO family. As to quaternary structure, in the presence of PdxS, forms a dodecamer of heterodimers. Only shows activity in the heterodimer.

It carries out the reaction aldehydo-D-ribose 5-phosphate + D-glyceraldehyde 3-phosphate + L-glutamine = pyridoxal 5'-phosphate + L-glutamate + phosphate + 3 H2O + H(+). It catalyses the reaction L-glutamine + H2O = L-glutamate + NH4(+). It participates in cofactor biosynthesis; pyridoxal 5'-phosphate biosynthesis. Catalyzes the hydrolysis of glutamine to glutamate and ammonia as part of the biosynthesis of pyridoxal 5'-phosphate. The resulting ammonia molecule is channeled to the active site of PdxS. This Acidothermus cellulolyticus (strain ATCC 43068 / DSM 8971 / 11B) protein is Pyridoxal 5'-phosphate synthase subunit PdxT.